We begin with the raw amino-acid sequence, 568 residues long: Fumarate hydratase 2 (568 aa).

Cys133 serves as a coordination point for [4Fe-4S] cluster. Residues 134–135, Arg173, Gly216, and 219–225 each bind (S)-malate; these read QD and NKAYLYQ. The [4Fe-4S] cluster site is built by Cys252 and Cys346. (S)-malate contacts are provided by residues Arg421, 467–471, and Lys491; that span reads TTAGR.

Belongs to the class-I fumarase family. In terms of assembly, homodimer. The cofactor is [4Fe-4S] cluster.

It localises to the cytoplasm. The protein resides in the cytosol. It carries out the reaction (S)-malate = fumarate + H2O. Specifically and competitively inhibited by 2-thiomalate, which coordinates with the catalytic [4Fe-4S] cluster. Weakly inhibited by malonate. Cytosolic fumarate hydratase that catalyzes the reversible hydration of fumarate to (S)-malate. This is Fumarate hydratase 2 from Leishmania major.